We begin with the raw amino-acid sequence, 362 residues long: Cobalt-precorrin-5B C(1)-methyltransferase (362 aa).

This sequence belongs to the CbiD family.

It carries out the reaction Co-precorrin-5B + S-adenosyl-L-methionine = Co-precorrin-6A + S-adenosyl-L-homocysteine. It participates in cofactor biosynthesis; adenosylcobalamin biosynthesis; cob(II)yrinate a,c-diamide from sirohydrochlorin (anaerobic route): step 6/10. Catalyzes the methylation of C-1 in cobalt-precorrin-5B to form cobalt-precorrin-6A. In Burkholderia multivorans (strain ATCC 17616 / 249), this protein is Cobalt-precorrin-5B C(1)-methyltransferase.